The sequence spans 102 residues: uncharacterized protein (102 aa).

A disordered region spans residues 1 to 43 (MNNAHEENISSVTGFKSTSGSPAIGSSLPGRSGEGRSSSSSSG). Residues 9 to 21 (ISSVTGFKSTSGS) are compositionally biased toward polar residues. The segment covering 25–43 (GSSLPGRSGEGRSSSSSSG) has biased composition (low complexity).

This is an uncharacterized protein from Saccharomyces cerevisiae (strain ATCC 204508 / S288c) (Baker's yeast).